The following is a 107-amino-acid chain: Prokineticin-2 (107 aa).

Residues 1–26 (MEDPRCAPLLLLLLLPLLLTPPAGDA) form the signal peptide. Intrachain disulfides connect C33–C45, C39–C57, C44–C85, C67–C93, and C87–C103.

Belongs to the AVIT (prokineticin) family. As to expression, expressed at high levels in testis and at lower levels in brain, lung, ovary, spleen, thymus and uterus.

It localises to the secreted. Functionally, may function as an output molecule from the suprachiasmatic nucleus (SCN) that transmits behavioral circadian rhythm. May also function locally within the SCN to synchronize output. Potently contracts gastrointestinal (GI) smooth muscle. In Rattus norvegicus (Rat), this protein is Prokineticin-2 (Prok2).